Consider the following 279-residue polypeptide: Serine protease 29 (279 aa).

The signal sequence occupies residues 1-17 (MLIQLCLTLFFLGCSIA). One can recognise a Peptidase S1 domain in the interval 31–276 (IVGGHSAPQG…FLPWITQQMQ (246 aa)). A disulfide bridge links Cys-62 with Cys-78. Catalysis depends on charge relay system residues His-77 and Asp-124. 3 cysteine pairs are disulfide-bonded: Cys-158-Cys-234, Cys-191-Cys-215, and Cys-224-Cys-252. Asn-197 is a glycosylation site (N-linked (GlcNAc...) asparagine). The Charge relay system role is filled by Ser-228. Asn-235 carries N-linked (GlcNAc...) asparagine glycosylation.

This sequence belongs to the peptidase S1 family. As to quaternary structure, homooligomer, heterodimer and heterotetramer. Able to form homo- and hetero- tetrameric structures. Heterotetramer is far more stable than the homotetramer. In terms of tissue distribution, expressed in embryos and placenta. Found in uterus especially in glandular epithelium during zona lysis and implantation.

Its subcellular location is the secreted. In terms of biological role, involved in embryo hatching and implantation. This chain is Serine protease 29 (Prss29), found in Mus musculus (Mouse).